The sequence spans 112 residues: Ribosome-binding factor A (112 aa).

It belongs to the RbfA family. Monomer. Binds 30S ribosomal subunits, but not 50S ribosomal subunits or 70S ribosomes.

The protein resides in the cytoplasm. Its function is as follows. One of several proteins that assist in the late maturation steps of the functional core of the 30S ribosomal subunit. Associates with free 30S ribosomal subunits (but not with 30S subunits that are part of 70S ribosomes or polysomes). Required for efficient processing of 16S rRNA. May interact with the 5'-terminal helix region of 16S rRNA. The chain is Ribosome-binding factor A from Ruthia magnifica subsp. Calyptogena magnifica.